A 362-amino-acid chain; its full sequence is S-adenosylmethionine-dependent nucleotide dehydratase RSAD2 (362 aa).

Positions 47–73 (EQPQVRGEPEDTQETQEDGNSTQPTTP) are disordered. The segment covering 64-73 (DGNSTQPTTP) has biased composition (polar residues). The 221-residue stretch at 70–290 (PTTPVSVNYH…LERHKEVSCL (221 aa)) folds into the Radical SAM core domain. [4Fe-4S] cluster-binding residues include Cys84, Cys88, and Cys91. N6-acetyllysine is present on Lys198. A Glycyl lysine isopeptide (Lys-Gly) (interchain with G-Cter in ubiquitin) cross-link involves residue Lys207.

Belongs to the radical SAM superfamily. RSAD2 family. Homodimer. Interacts with IRAK1 and TRAF6. Interacts with FPPS. Interacts with HADHB. Interacts (via C-terminus) with VAPA/VAP33 (via C-terminus). [4Fe-4S] cluster is required as a cofactor. In terms of processing, acetylated by HAT1. HAT1-mediated acetylation of Lys-198 in turn recruits UBE4A that stimulates RSAD2 polyubiquitination leading to proteasomal degradation. 'Lys-6'-linked polyubiquitination at Lys-207 leads to RSAD2 protein degradation. As to expression, expressed at higher levels in atherosclerotic arteries than in normal arteries.

It localises to the endoplasmic reticulum membrane. The protein resides in the golgi apparatus. Its subcellular location is the endoplasmic reticulum. It is found in the lipid droplet. The protein localises to the mitochondrion. It localises to the mitochondrion inner membrane. The protein resides in the mitochondrion outer membrane. The catalysed reaction is CTP + AH2 + S-adenosyl-L-methionine = 3'-deoxy-3',4'-didehydro-CTP + 5'-deoxyadenosine + L-methionine + A + H2O + H(+). Its activity is regulated as follows. IRAK1 and TRAF6 synergistically activate RSAD2 increasing its activity with CTP as substrate about 10-fold. Its function is as follows. Interferon-inducible antiviral protein which plays a major role in the cell antiviral state induced by type I and type II interferon. Catalyzes the conversion of cytidine triphosphate (CTP) to 3'-deoxy-3',4'-didehydro-CTP (ddhCTP) via a SAM-dependent radical mechanism. In turn, ddhCTP acts as a chain terminator for the RNA-dependent RNA polymerases from multiple viruses and directly inhibits viral replication. Therefore, inhibits a wide range of DNA and RNA viruses. Also promotes TLR7 and TLR9-dependent production of IFN-beta production in plasmacytoid dendritic cells (pDCs) by facilitating 'Lys-63'-linked ubiquitination of IRAK1 by TRAF6. Plays a role in CD4+ T-cells activation and differentiation. Facilitates T-cell receptor (TCR)-mediated GATA3 activation and optimal T-helper 2 (Th2) cytokine production by modulating NFKB1 and JUNB activities. Can inhibit secretion of soluble proteins. The protein is S-adenosylmethionine-dependent nucleotide dehydratase RSAD2 of Mus musculus (Mouse).